The sequence spans 177 residues: 3-hydroxyanthranilate 3,4-dioxygenase (177 aa).

R47 serves as a coordination point for O2. H51, E57, and H95 together coordinate Fe cation. Position 57 (E57) interacts with substrate. Substrate contacts are provided by R99 and E110. Positions 125, 128, 162, and 165 each coordinate Fe cation.

This sequence belongs to the 3-HAO family. As to quaternary structure, homodimer. The cofactor is Fe(2+).

The catalysed reaction is 3-hydroxyanthranilate + O2 = (2Z,4Z)-2-amino-3-carboxymuconate 6-semialdehyde. Its pathway is cofactor biosynthesis; NAD(+) biosynthesis; quinolinate from L-kynurenine: step 3/3. Its function is as follows. Catalyzes the oxidative ring opening of 3-hydroxyanthranilate to 2-amino-3-carboxymuconate semialdehyde, which spontaneously cyclizes to quinolinate. This is 3-hydroxyanthranilate 3,4-dioxygenase from Burkholderia cenocepacia (strain ATCC BAA-245 / DSM 16553 / LMG 16656 / NCTC 13227 / J2315 / CF5610) (Burkholderia cepacia (strain J2315)).